The sequence spans 508 residues: Serine/threonine protein kinase OSK3 (508 aa).

The region spanning 17–269 (YNLGRTLGIG…IREIREHQWF (253 aa)) is the Protein kinase domain. Residues 23–31 (LGIGSFGKV) and Lys46 each bind ATP. The active-site Proton acceptor is the Asp140. In terms of domain architecture, UBA spans 290–330 (MIDEDTLQDVVNLGYGKDHVCESLRNRLQNEATVAYYLLLD). The KA1 domain occupies 459-507 (NGRLPAVIKFEIQLYKTRDEKYLLDMQRVTGPQLLFLDFCADFLTKLRV).

Belongs to the protein kinase superfamily. Ser/Thr protein kinase family. In terms of assembly, interacts with HDR1. As to expression, strongly expressed in immature seeds. Mostly expressed in panicles, and to a lower extent, in leaf sheaths.

The protein localises to the nucleus. The catalysed reaction is L-seryl-[protein] + ATP = O-phospho-L-seryl-[protein] + ADP + H(+). It carries out the reaction L-threonyl-[protein] + ATP = O-phospho-L-threonyl-[protein] + ADP + H(+). The polypeptide is Serine/threonine protein kinase OSK3 (Oryza sativa subsp. indica (Rice)).